The primary structure comprises 87 residues: HssA/B-like protein 58 (87 aa).

The span at 1–13 (MTILSAITSISRP) shows a compositional bias: polar residues. The interval 1-31 (MTILSAITSISRPNKSSKSVISSNGGSSLSM) is disordered. The span at 14 to 31 (NKSSKSVISSNGGSSLSM) shows a compositional bias: low complexity.

This sequence belongs to the hssA/B family.

The protein is HssA/B-like protein 58 (hssl58) of Dictyostelium discoideum (Social amoeba).